The primary structure comprises 227 residues: MVEVKKHKFPGVYTVIDDDGSERIATKNLVPGQRVYGERVIKWEGEEYRIWNPNRSKLGAAIMNGLKNFPIKPGKSVLYLGIASGTTASHVSDIVGWEGKIFGIEFSPRVLRELVPIVEERRNIVPILGDATKPEEYRALVPKVDVIFEDVAQPTQAKILIDNAEVYLKRGGYGMIAVKSRSIDVTKEPEQVFREVERELSEYFEVIERLNLEPYEKDHALFVVRKT.

S-adenosyl-L-methionine contacts are provided by residues 86–87, 105–106, 130–131, and 150–153; these read TT, EF, DA, and DVAQ.

This sequence belongs to the methyltransferase superfamily. Fibrillarin family. As to quaternary structure, interacts with nop5. Component of box C/D small ribonucleoprotein (sRNP) particles that contain rpl7ae, FlpA and nop5, plus a guide RNA.

In terms of biological role, involved in pre-rRNA and tRNA processing. Utilizes the methyl donor S-adenosyl-L-methionine to catalyze the site-specific 2'-hydroxyl methylation of ribose moieties in rRNA and tRNA. Site specificity is provided by a guide RNA that base pairs with the substrate. Methylation occurs at a characteristic distance from the sequence involved in base pairing with the guide RNA. This Pyrococcus horikoshii (strain ATCC 700860 / DSM 12428 / JCM 9974 / NBRC 100139 / OT-3) protein is Fibrillarin-like rRNA/tRNA 2'-O-methyltransferase.